We begin with the raw amino-acid sequence, 155 residues long: Small ribosomal subunit protein uS7cz/uS7cy (155 aa).

It belongs to the universal ribosomal protein uS7 family. Part of the 30S ribosomal subunit.

It localises to the plastid. Functionally, one of the primary rRNA binding proteins, it binds directly to 16S rRNA where it nucleates assembly of the head domain of the 30S subunit. This is Small ribosomal subunit protein uS7cz/uS7cy (rps7-A) from Epifagus virginiana (Beechdrops).